The sequence spans 294 residues: Homoserine kinase (294 aa).

Position 84–94 (84–94 (PFSRGLGSSSA)) interacts with ATP.

This sequence belongs to the GHMP kinase family. Homoserine kinase subfamily.

The protein resides in the cytoplasm. The catalysed reaction is L-homoserine + ATP = O-phospho-L-homoserine + ADP + H(+). It functions in the pathway amino-acid biosynthesis; L-threonine biosynthesis; L-threonine from L-aspartate: step 4/5. In terms of biological role, catalyzes the ATP-dependent phosphorylation of L-homoserine to L-homoserine phosphate. The polypeptide is Homoserine kinase (Campylobacter concisus (strain 13826)).